A 529-amino-acid chain; its full sequence is Extracellular signal-regulated kinase 1 (529 aa).

2 disordered regions span residues 1 to 20 (MEPEFDHFQSQMDSDNTHQS) and 100 to 131 (QQNQQQQSQQMTQQQLQQLMPPPPTSDTSNFN). Positions 8–20 (FQSQMDSDNTHQS) are enriched in polar residues. Low complexity predominate over residues 100-117 (QQNQQQQSQQMTQQQLQQ). The Protein kinase domain occupies 149-439 (YSIVKCIGHG…EALAHPYFQS (291 aa)). ATP contacts are provided by residues 155–163 (IGHGAYGVV) and lysine 178. Catalysis depends on aspartate 275, which acts as the Proton acceptor. Position 309 is a phosphothreonine (threonine 309). Positions 309–311 (TEY) match the TXY motif. Tyrosine 311 carries the phosphotyrosine modification.

It belongs to the protein kinase superfamily. CMGC Ser/Thr protein kinase family. MAP kinase subfamily. It depends on Mg(2+) as a cofactor. Dually phosphorylated on Thr-309 and Tyr-311, which activates the enzyme.

It carries out the reaction L-seryl-[protein] + ATP = O-phospho-L-seryl-[protein] + ADP + H(+). It catalyses the reaction L-threonyl-[protein] + ATP = O-phospho-L-threonyl-[protein] + ADP + H(+). With respect to regulation, activated by tyrosine and threonine phosphorylation. Its function is as follows. Kinase involved in a signal transduction pathway. The polypeptide is Extracellular signal-regulated kinase 1 (erkA) (Dictyostelium discoideum (Social amoeba)).